Reading from the N-terminus, the 328-residue chain is Probable voltage-gated potassium channel subunit beta (328 aa).

NADP(+)-binding residues include tryptophan 21, glutamine 27, and aspartate 49. The active-site Proton donor/acceptor is tyrosine 54. Residues serine 152, glutamine 178, tryptophan 207, serine 208, proline 209, leucine 210, alanine 211, lysine 218, arginine 229, glycine 285, threonine 287, glutamine 291, glutamate 294, and asparagine 295 each coordinate NADP(+).

It belongs to the shaker potassium channel beta subunit family. As to quaternary structure, forms heteromultimeric complexes with potassium channel alpha subunits. As to expression, expressed in roots, leaves and flowers (at protein level).

Its function is as follows. Probable accessory potassium channel protein which modulates the activity of the pore-forming alpha subunit. In Arabidopsis thaliana (Mouse-ear cress), this protein is Probable voltage-gated potassium channel subunit beta (KAB1).